A 159-amino-acid polypeptide reads, in one-letter code: Large ribosomal subunit protein uL22c (159 aa).

This sequence belongs to the universal ribosomal protein uL22 family. In terms of assembly, part of the 50S ribosomal subunit.

Its subcellular location is the plastid. It is found in the chloroplast. This protein binds specifically to 23S rRNA. In terms of biological role, the globular domain of the protein is located near the polypeptide exit tunnel on the outside of the subunit, while an extended beta-hairpin is found that lines the wall of the exit tunnel in the center of the 70S ribosome. This is Large ribosomal subunit protein uL22c (rpl22) from Ipomoea purpurea (Common morning glory).